We begin with the raw amino-acid sequence, 63 residues long: Large ribosomal subunit protein uL29 (63 aa).

It belongs to the universal ribosomal protein uL29 family.

The polypeptide is Large ribosomal subunit protein uL29 (Bordetella petrii (strain ATCC BAA-461 / DSM 12804 / CCUG 43448)).